Reading from the N-terminus, the 404-residue chain is Agnestins biosynthesis cluster transcription factor AgnL10 (404 aa).

Residues 23-50 (CNRCAVSKIKCSKEKPACARCAKQDKVC) constitute a DNA-binding region (zn(2)-C6 fungal-type). Disordered regions lie at residues 54-83 (ATKRAGRKRGSRRHNNPVPSPTTQDLPTAA), 188-209 (ASASSMDPAAGPQRPPDEPSSG), and 294-318 (PGPDGDGVSWDNSTPPPGEQGAGVD). Residues 57-68 (RAGRKRGSRRHN) show a composition bias toward basic residues. Over residues 74-83 (PTTQDLPTAA) the composition is skewed to polar residues. Residues 188–197 (ASASSMDPAA) show a composition bias toward low complexity.

Its subcellular location is the nucleus. In terms of biological role, transcription factor that regulates the expression of the gene cluster that mediates the biosynthesis of agnestins, dihydroxy-xanthone metabolites. In Paecilomyces divaricatus (Penicillium divaricatum), this protein is Agnestins biosynthesis cluster transcription factor AgnL10.